Reading from the N-terminus, the 350-residue chain is MALEQNQSTDYYYEENEMNGTYDYSQYELICIKEDVREFAKVFLPVFLTIVFVIGLAGNSMVVAIYAYYKKQRTKTDVYILNLAVADLLLLFTLPFWAVNAVHGWVLGKIMCKITSALYTLNFVSGMQFLACISIDRYVAVTKVPSQSGVGKPCWIICFCVWMAAILLSIPQLVFYTVNDNARCIPIFPRYLGTSMKALIQMLEICIGFVVPFLIMGVCYFITARTLMKMPNIKISRPLKVLLTVVIVFIVTQLPYNIVKFCRAIDIIYSLITSCNMSKRMDIAIQVTESIALFHSCLNPILYVFMGASFKNYVMKVAKKYGSWRRQRQSVEEFPFDSEGPTEPTSTFSI.

Residues 1 to 42 (MALEQNQSTDYYYEENEMNGTYDYSQYELICIKEDVREFAKV) lie on the Extracellular side of the membrane. Residues Asn-6 and Asn-19 are each glycosylated (N-linked (GlcNAc...) asparagine). The chain crosses the membrane as a helical span at residues 43-63 (FLPVFLTIVFVIGLAGNSMVV). Topologically, residues 64-87 (AIYAYYKKQRTKTDVYILNLAVAD) are cytoplasmic. The helical transmembrane segment at 88 to 108 (LLLLFTLPFWAVNAVHGWVLG) threads the bilayer. Topologically, residues 109–113 (KIMCK) are extracellular. Cys-112 and Cys-184 are joined by a disulfide. The chain crosses the membrane as a helical span at residues 114–134 (ITSALYTLNFVSGMQFLACIS). Over 135–154 (IDRYVAVTKVPSQSGVGKPC) the chain is Cytoplasmic. Residues 155 to 175 (WIICFCVWMAAILLSIPQLVF) traverse the membrane as a helical segment. The Extracellular segment spans residues 176–201 (YTVNDNARCIPIFPRYLGTSMKALIQ). Residues 202 to 222 (MLEICIGFVVPFLIMGVCYFI) traverse the membrane as a helical segment. Over 223–240 (TARTLMKMPNIKISRPLK) the chain is Cytoplasmic. The chain crosses the membrane as a helical span at residues 241–261 (VLLTVVIVFIVTQLPYNIVKF). Residues 262–289 (CRAIDIIYSLITSCNMSKRMDIAIQVTE) are Extracellular-facing. The chain crosses the membrane as a helical span at residues 290–310 (SIALFHSCLNPILYVFMGASF). The Cytoplasmic portion of the chain corresponds to 311–350 (KNYVMKVAKKYGSWRRQRQSVEEFPFDSEGPTEPTSTFSI).

This sequence belongs to the G-protein coupled receptor 1 family. Atypical chemokine receptor subfamily. Forms heteromers with CXCR3. Interacts with ARRB1 and ARRB2. In terms of processing, the Ser/Thr residues in the C-terminal cytoplasmic tail may be phosphorylated. In terms of tissue distribution, predominantly expressed in heart. Lower expression in lung, pancreas, spleen, colon, skeletal muscle and small intestine.

It is found in the early endosome. Its subcellular location is the recycling endosome. It localises to the cell membrane. Its function is as follows. Atypical chemokine receptor that controls chemokine levels and localization via high-affinity chemokine binding that is uncoupled from classic ligand-driven signal transduction cascades, resulting instead in chemokine sequestration, degradation, or transcytosis. Also known as interceptor (internalizing receptor) or chemokine-scavenging receptor or chemokine decoy receptor. Acts as a receptor for chemokines CCL2, CCL8, CCL13, CCL19, CCL21 and CCL25. Chemokine-binding does not activate G-protein-mediated signal transduction but instead induces beta-arrestin recruitment, leading to ligand internalization. Plays an important role in controlling the migration of immune and cancer cells that express chemokine receptors CCR7 and CCR9, by reducing the availability of CCL19, CCL21, and CCL25 through internalization. Negatively regulates CXCR3-induced chemotaxis. Regulates T-cell development in the thymus. The sequence is that of Atypical chemokine receptor 4 (ACKR4) from Homo sapiens (Human).